The primary structure comprises 404 residues: Type I restriction enzyme EcoR124I/EcoR124II specificity subunit (404 aa).

The tract at residues 1 to 153 (MSEMSYLEKL…PIPCPDNPEK (153 aa)) is target-recognition domain 1. A conserved region 1 region spans residues 154–199 (SLAIQSEIVRILDKFTALTAELTAELNMRKKQYNYYRDQLLSFKEG). Positions 200–349 (EVEWKTLGEI…KLFSFKIPVP (150 aa)) are target-recognition domain 2. Residues 350-404 (NINEQQRIVEILDKFDTLTNSITEGLPREIELRQKQYEYYRDLLFSFPKPETVSN) form a conserved region 2 region.

Belongs to the type-I restriction system S methylase family. As to quaternary structure, the type I restriction/modification system is composed of three polypeptides R, M and S; the restriction enzyme has stoichiometry R(2)M(2)S(1) while the methyltransferase is M(2)S(1). There is an equilibrium between R(2)M(2)S(1) and R(1)M(2)S(1); the latter is methylation and translocation proficient but restriction deficient. (Microbial infection) Holoenenzyme interacts with Escherichia phage T7 protein Ocr; this interaction leads to the inhibition of the restriction activity, but may still allow methylation and translocation.

Functionally, the specificity (S) subunit of a type I restriction enzyme; this subunit dictates DNA sequence specificity. The presence or absence of a 4-residue repeat changes the sequence specificity; a third copy of TAEL inserted at position 179-180 changes the recognition site from 5'-GAAN(6)RTCG-3' (for EcoR124I) to 5'-GAAN(7)RTCG-3' (for EcoR124II). The M and S subunits together form a methyltransferase (MTase) that methylates A-3 on the top and bottom strand of the sequence 5'-GAAN(7)RTCG-3'. In the presence of the R subunit the complex can also act as an endonuclease, binding to the same target sequence but cutting the DNA some distance from this site. Whether the DNA is cut or modified depends on the methylation state of the target sequence. When the target site is unmodified, the DNA is cut. When the target site is hemimethylated, the complex acts as a maintenance MTase modifying the DNA so that both strands become methylated. After locating a non-methylated recognition site, the enzyme complex serves as a molecular motor that translocates DNA in an ATP-dependent manner until a collision occurs that triggers cleavage. The R(1)M(2)S(1) complex translocates an average of 555 bp/second on nicked DNA; the R(2)M(2)S(1) complex translocates at double that speed. The 2 R subunit motors are independent and track along the helical pitch of the DNA, inducing positive supercoiling ahead of themselves. This Escherichia coli protein is Type I restriction enzyme EcoR124I/EcoR124II specificity subunit (hsdS).